The sequence spans 365 residues: Outer membrane porin protein LC (365 aa).

Residues 1–23 (MKKLTVAISAVAASVLMAMSAQA) form the signal peptide.

The protein belongs to the Gram-negative porin family. Homotrimer.

Its subcellular location is the host cell outer membrane. Forms pores that allow passive diffusion of small molecules across the host cell outer membrane. The polypeptide is Outer membrane porin protein LC (LC) (Enterobacteria phage PA-2 (Bacteriophage PA-2)).